The following is a 310-amino-acid chain: MTTTPNTPLPNSLQKPLERFYEFLRSEKGLSLHTQRNYKQQLETMAQHLAEMGLKDWSQVDAGWVRQLAGKGMREGMKASSLATRLSSLRSFFDFLILRGEMSANPAKGVSAPRKKRPLPKNLDVDEVNQLLEVNEDDPLAIRDRAMMELMYGAGLRLAELVSVDVRDVQLRSGELRVIGKGDKERKVPFSGMATEWVGKWLRVRGDLAAPGEPALFVSKLGTRISHRSVQKRMAEWGQKQSVASHISPHKLRHSFATHMLESSNNLRAVQELLGHENISTTQIYTHLDFQHLAQAYDQAHPRARKKNGE.

Positions 11 to 97 (NSLQKPLERF…SLRSFFDFLI (87 aa)) constitute a Core-binding (CB) domain. The Tyr recombinase domain maps to 118 to 298 (PLPKNLDVDE…DFQHLAQAYD (181 aa)). Catalysis depends on residues Arg-157, Lys-181, His-250, Arg-253, and His-276. Tyr-285 functions as the O-(3'-phospho-DNA)-tyrosine intermediate in the catalytic mechanism.

Belongs to the 'phage' integrase family. XerC subfamily. In terms of assembly, forms a cyclic heterotetrameric complex composed of two molecules of XerC and two molecules of XerD.

It localises to the cytoplasm. Its function is as follows. Site-specific tyrosine recombinase, which acts by catalyzing the cutting and rejoining of the recombining DNA molecules. The XerC-XerD complex is essential to convert dimers of the bacterial chromosome into monomers to permit their segregation at cell division. It also contributes to the segregational stability of plasmids. This chain is Tyrosine recombinase XerC, found in Vibrio parahaemolyticus serotype O3:K6 (strain RIMD 2210633).